The sequence spans 329 residues: MKNIAIIGASGYTGAQITSLINAEANLSIQGLYVSESSLDKGKPLSELYPAYSHISLCLNPLSEDAKQTIVATADAVVLATDHAVSLHLAAWFYQQGLAVFDLSGAYRFSDVAQYPKWYGFTHEYPQVLADAVYGLAEWNSDQIAATKMIAVPGCYPTASLIALKPLSHLLTDVLPVINAVSGVTGAGRKAQLHTSFCEVSLTPYGVLAHRHQPEIATQLGQEVIFTPHLGNFKRGILATITVKLKPGTTLSDIQQAYQCYDSAELVTVKQNQFPKVDDVVQTPHCHLGWKFDEQTGYLVVASAIDNLMKGAASQALQCIKIHFGESVK.

Cys155 is an active-site residue.

The protein belongs to the NAGSA dehydrogenase family. Type 1 subfamily.

It is found in the cytoplasm. It carries out the reaction N-acetyl-L-glutamate 5-semialdehyde + phosphate + NADP(+) = N-acetyl-L-glutamyl 5-phosphate + NADPH + H(+). Its pathway is amino-acid biosynthesis; L-arginine biosynthesis; N(2)-acetyl-L-ornithine from L-glutamate: step 3/4. Its function is as follows. Catalyzes the NADPH-dependent reduction of N-acetyl-5-glutamyl phosphate to yield N-acetyl-L-glutamate 5-semialdehyde. This chain is N-acetyl-gamma-glutamyl-phosphate reductase, found in Shewanella pealeana (strain ATCC 700345 / ANG-SQ1).